We begin with the raw amino-acid sequence, 514 residues long: MGRKKIQIQRITDERNRQVTFTKRKFGLMKKAYELSVLCDCEIALIIFNHSNKLFQYASTDMDKVLLKYTEYNEPHESRTNADIIETLRKKGFNGCDSPEPDGEDSLEQSPLLEDKYRRASEELDGLFRRYGSSVPAPNFAMPVTVPVSNQSSMQFSNPSSSLVTPSLVTSSLTDPRLLSPQQPALQRNSVSPGLPQRPASAGAMLGGDLNSANGACPSPVGNGYVSARASPGLLPVANGNSLNKVIPAKSPPPPTHNTQLGAPSRKPDLRVITSQGGKGLMHHLTEDHLDLNNAQRLGVSQSTHSLTTPVVSVATPSLLSQGLPFSSMPTAYNTDYQLPSAELSSLPAFSSPAGLALGNVTAWQQPQPPQQPQPPQPPQSQPQPPQPQPQQPPQQQPHLVPVSLSNLIPGSPLPHVGAALTVTTHPHISIKSEPVSPSRERSPAPPPPAVFPAARPEPGEGLSSPAGGSYETGDRDDGRGDFGPTLGLLRPAPEPEAEGSAVKRMRLDTWTLK.

Residues 3–57 (RKKIQIQRITDERNRQVTFTKRKFGLMKKAYELSVLCDCEIALIIFNHSNKLFQY) enclose the MADS-box domain. Positions 58–86 (ASTDMDKVLLKYTEYNEPHESRTNADIIE) form a DNA-binding region, mef2-type. Phosphoserine is present on residues Asp-97, Ser-98, and Ser-106. Leu-107 carries the phosphothreonine modification. Ser-110 carries the post-translational modification Phosphoserine. Ser-121 is subject to Phosphoserine; by PKA. Residues 174 to 207 (TDPRLLSPQQPALQRNSVSPGLPQRPASAGAMLG) are disordered. A Phosphoserine; by MAPK7 modification is found at Ser-180. A compositionally biased stretch (polar residues) spans 180–192 (SPQQPALQRNSVS). A Phosphoserine; by PKA modification is found at Ser-190. Ser-231 is modified (phosphoserine). A disordered region spans residues 244 to 269 (NKVIPAKSPPPPTHNTQLGAPSRKPD). N6-acetyllysine is present on Lys-245. Ser-251 bears the Phosphoserine mark. The tract at residues 286–292 (TEDHLDL) is beta domain. 2 disordered regions span residues 364–399 (WQQP…QQPH) and 430–514 (SIKS…WTLK). Pro residues predominate over residues 367 to 396 (PQPPQQPQPPQPPQSQPQPPQPQPQQPPQQ). Residue Lys-432 is modified to N6-acetyllysine; alternate. A Glycyl lysine isopeptide (Lys-Gly) (interchain with G-Cter in SUMO); alternate cross-link involves residue Lys-432. Phosphoserine is present on Ser-437.

It belongs to the MEF2 family. Forms a complex with class II HDACs in undifferentiating cells. On myogenic differentiation, HDACs are released into the cytoplasm allowing MEF2s to interact with other proteins for activation. Interacts with HDAC4 (in undifferentiating cells); the interaction translocates MEF2D to nuclear dots. Forms a heterodimer with MEF2A. Interacts with MAPK7; the interaction phosphorylates but does not activate MEF2D. Interacts with MYOG. Interacts with CCAR2 and HDAC3. Post-translationally, phosphorylated on Ser-437 is which is required for Lys-432 sumoylation and inhibits transcriptional activity. Phosphorylation on this residue by CDK5 is dependent on p35 and calpains. Phosphorylated by PKA at Ser-121 and Ser-190 represses transcriptional activity in embryonic and postnatal skeletal muscle, and stabilizes protein levels. No in vitro phosphorylation by PKA on Thr-20. Phosphorylated and activated by CaMK4. In terms of processing, acetylated on Lys-432 by CREBBP. Acetylated by EP300. Deacetylated by SIRT1 and HDAC3. Sumoylated on Lys-432 with SUMO2 but not SUMO1; which inhibits transcriptional activity and myogenic activity. Desumoylated by SENP3. Post-translationally, proteolytically cleaved in cerebellar granule neurons by caspase 7 following neurotoxicity. Preferentially cleaves the CDK5-mediated hyperphosphorylated form which leads to neuron apoptosis and transcriptional inactivation. Widely expressed though mainly restricted to skeletal and cardiac muscle, brain, neurons and lymphocytes. Differentially expressed depending on if isoforms contain the beta domain or not, with the total expression of the beta domain-lacking isoforms vastly exceeding that of the beta domain-containing isoforms. Isoforms containing the beta domain are expressed primarily in skeletal and cardiac muscle and in brain. Also present in lung and testis. Splicing to include the beta domain is induced in differentiating myocytes. Isoforms lacking the beta domain are expressed less abundantly in skeletal muscle, brain and lymphocytes, and are uniquely found in ovary, liver, spleen and kidney. In embryos, the beta domain-containing and beta domain-lacking isoforms are equally expressed. Also expressed cerebellar granule neurons and other regions of the CNS. Highest levels in the olfactory bulb, cortex, hippocampus, thalamus and cerebellum.

The protein resides in the nucleus. Its function is as follows. Transcriptional activator which binds specifically to the MEF2 element, 5'-YTA[AT](4)TAR-3', found in numerous muscle-specific, growth factor- and stress-induced genes. Mediates cellular functions not only in skeletal and cardiac muscle development, but also in neuronal differentiation and survival. Plays diverse roles in the control of cell growth, survival and apoptosis via p38 MAPK signaling in muscle-specific and/or growth factor-related transcription. Plays a critical role in the regulation of neuronal apoptosis. The sequence is that of Myocyte-specific enhancer factor 2D (Mef2d) from Mus musculus (Mouse).